A 480-amino-acid chain; its full sequence is Peptidase S41 family protein ustP (480 aa).

Residues 78–97 (CMPNKKSRPPDPRPSLAVGK) are disordered. The interval 134–336 (DVAVLQLPTF…LKQQGVRSIV (203 aa)) is peptidase S41 domain.

It belongs to the peptidase S41A family.

It functions in the pathway mycotoxin biosynthesis. Peptidase S41 family protein; part of the gene cluster that mediates the biosynthesis of the secondary metabolite ustiloxin B, an antimitotic tetrapeptide. First, ustA is processed by the subtilisin-like endoprotease Kex2 that is outside the ustiloxin B gene cluster, at the C-terminal side of Arg-Lys, after transfer to Golgi apparatus through the endoplasmic reticulum (ER). Cleavage by KEX2 generates 16 peptides YAIG-I to YAIG-XVI. To process the precursor peptide further, at least two peptidases are necessary to cleave the N-terminal and C-terminal sides of the Tyr-Ala-Ile-Gly core peptide which serves as backbone for the synthesis of ustiloxin B, through cyclization and modification of the tyrosine with a non-protein coding amino acid, norvaline. One of the two peptidases must be the serine peptidase ustP; and the other pepdidase is probably ustH. Macrocyclization of the core peptide derived from ustA requires the tyrosinase ustQ, as well as the homologous oxidases ustYa and ustYb, and leads to the production of the first cyclization product N-desmethylustiloxin F. For the formation of N-desmethylustiloxin F, three oxidation steps are required, hydroxylation at the benzylic position, hydroxylation at either the aromatic ring of Tyr or beta-position of Ile, and oxidative cyclization. UstQ may catalyze the oxidation of a phenol moiety, whereas the ustYa and ustYb are most likely responsible for the remaining two-step oxidations. N-desmethylustiloxin F is then methylated by ustM to yield ustiloxin F which in turn substrate of the cytochrome P450 monooxygenase ustC which catalyzes the formation of S-deoxyustiloxin H. The flavoprotein monooxygenases ustF1 and ustF2 then participate in the modification of the side chain of S-deoxyustiloxin H, leading to the synthesis of an oxime intermediate, via ustiloxin H. Finally, carboxylative dehydration performed by the cysteine desulfurase-like protein ustD yields ustiloxin B. This is Peptidase S41 family protein ustP from Aspergillus flavus (strain ATCC 200026 / FGSC A1120 / IAM 13836 / NRRL 3357 / JCM 12722 / SRRC 167).